An 852-amino-acid polypeptide reads, in one-letter code: Protein SBE22 (852 aa).

The interval 1 to 158 is disordered; sequence MTSIQERGTS…ADKSKINTFP (158 aa). Residues 15 to 26 show a composition bias toward basic and acidic residues; that stretch reads SLKEGEASDRSS. Polar residues predominate over residues 43–61; it reads PPSQTTLGRSRAGSNTMNK. Ser72 bears the Phosphoserine mark. Residues 74–96 show a composition bias toward polar residues; sequence NLLSNMNCSDNGNGGNMLNSFVN. Over residues 124-139 the composition is skewed to low complexity; the sequence is TTEVFSSTSASSSLGD. Ser201 is modified (phosphoserine). Residues 206–248 are disordered; the sequence is AAEKTMNKSRHSYQEQFSSKKSQSSLLNSKQRSRAKSQTCSST. Positions 224-235 are enriched in low complexity; it reads SKKSQSSLLNSK. 3 positions are modified to phosphoserine: Ser459, Ser517, and Ser520.

This sequence belongs to the SBE2 family.

It is found in the cytoplasm. The protein resides in the golgi apparatus. Its function is as follows. With SBE2, is involved in cell wall integrity and polarity processes like bud growth, through the transport of CHS3 and UTR2 to sites of growth. The protein is Protein SBE22 (SBE22) of Saccharomyces cerevisiae (strain YJM789) (Baker's yeast).